We begin with the raw amino-acid sequence, 514 residues long: L-Threonine dehydratase biosynthetic IlvA (514 aa).

Lys-62 bears the N6-(pyridoxal phosphate)lysine mark. Pyridoxal 5'-phosphate is bound by residues Asn-89, 188-192, and Ser-315; that span reads GGGGL. 2 ACT-like domains span residues 339–411 and 434–504; these read ALLA…DLSD and RLYS…DESN.

It belongs to the serine/threonine dehydratase family. As to quaternary structure, homotetramer. Pyridoxal 5'-phosphate serves as cofactor.

The enzyme catalyses L-threonine = 2-oxobutanoate + NH4(+). It participates in amino-acid biosynthesis; L-isoleucine biosynthesis; 2-oxobutanoate from L-threonine: step 1/1. With respect to regulation, isoleucine allosterically inhibits whereas valine allosterically activates this enzyme. Functionally, catalyzes the anaerobic formation of alpha-ketobutyrate and ammonia from threonine in a two-step reaction. The first step involved a dehydration of threonine and a production of enamine intermediates (aminocrotonate), which tautomerizes to its imine form (iminobutyrate). Both intermediates are unstable and short-lived. The second step is the nonenzymatic hydrolysis of the enamine/imine intermediates to form 2-ketobutyrate and free ammonia. In the low water environment of the cell, the second step is accelerated by RidA. This Salmonella typhimurium (strain LT2 / SGSC1412 / ATCC 700720) protein is L-Threonine dehydratase biosynthetic IlvA (ilvA).